Consider the following 382-residue polypeptide: MKITRLTTYHAAPRWLFLKVETDEGITGWGEPVIEGRARSVEAAVHELAGYVVGKDPARINDLWQTMYRAGFYRGGAILMSAIAGIDQALWDIKGKALGVPVYELLGGLVRDRMKTYRWVGGDRPGAIIQQITDYRALGFDTFKFNGTEEMKLIDSARAVDAAVVKVAEIREAFGNTIDFGIDFHGRVGAPMAKALLRELEPFKPLFVEEPVLAEQAEYYPRLAASTSIPLAAGERMFSRFEFKNVLCAGGIGMVQPDLSHAGGITECVKIAAIAEAYDVGFAPHCPLGPIALAACLHVDFVSHNAVLQEQSIGIHYNEGADLLDYVINKDDFHCVDGSIAALPKPGLGVEIDEDMLKRANENPPDWRNPVWRHSDGSIAEW.

Asp183 lines the Mg(2+) pocket. His185 serves as the catalytic Proton donor. Mg(2+) contacts are provided by Glu209 and Glu235. Residue His285 is the Proton acceptor of the active site. A disordered region spans residues 361-382 (NENPPDWRNPVWRHSDGSIAEW).

Belongs to the mandelate racemase/muconate lactonizing enzyme family. GalD subfamily. It depends on Mg(2+) as a cofactor.

The enzyme catalyses D-galactonate = 2-dehydro-3-deoxy-D-galactonate + H2O. The protein operates within carbohydrate acid metabolism; D-galactonate degradation; D-glyceraldehyde 3-phosphate and pyruvate from D-galactonate: step 1/3. Catalyzes the dehydration of D-galactonate to 2-keto-3-deoxy-D-galactonate. The chain is D-galactonate dehydratase from Xanthomonas oryzae pv. oryzae (strain MAFF 311018).